A 551-amino-acid polypeptide reads, in one-letter code: Chaperonin GroEL (551 aa).

ATP-binding positions include 30–33, Lys51, 87–91, Gly415, 478–480, and Asp494; these read TLGP, DGTTT, and NAA.

This sequence belongs to the chaperonin (HSP60) family. In terms of assembly, forms a cylinder of 14 subunits composed of two heptameric rings stacked back-to-back. Interacts with the co-chaperonin GroES.

It is found in the cytoplasm. It catalyses the reaction ATP + H2O + a folded polypeptide = ADP + phosphate + an unfolded polypeptide.. Its function is as follows. Together with its co-chaperonin GroES, plays an essential role in assisting protein folding. The GroEL-GroES system forms a nano-cage that allows encapsulation of the non-native substrate proteins and provides a physical environment optimized to promote and accelerate protein folding. This is Chaperonin GroEL from Syntrophotalea carbinolica (strain DSM 2380 / NBRC 103641 / GraBd1) (Pelobacter carbinolicus).